The primary structure comprises 477 residues: Ribulose bisphosphate carboxylase large chain (477 aa).

A propeptide spanning residues 1-2 (MS) is cleaved from the precursor. Pro3 is subject to N-acetylproline. An N6,N6,N6-trimethyllysine modification is found at Lys14. The substrate site is built by Asn123 and Thr173. The active-site Proton acceptor is the Lys175. Lys177 serves as a coordination point for substrate. Mg(2+) contacts are provided by Lys201, Asp203, and Glu204. Lys201 is modified (N6-carboxylysine). His294 functions as the Proton acceptor in the catalytic mechanism. Substrate contacts are provided by Arg295, His327, and Ser379.

It belongs to the RuBisCO large chain family. Type I subfamily. In terms of assembly, heterohexadecamer of 8 large chains and 8 small chains; disulfide-linked. The disulfide link is formed within the large subunit homodimers. Requires Mg(2+) as cofactor. The disulfide bond which can form in the large chain dimeric partners within the hexadecamer appears to be associated with oxidative stress and protein turnover.

It localises to the plastid. Its subcellular location is the chloroplast. It carries out the reaction 2 (2R)-3-phosphoglycerate + 2 H(+) = D-ribulose 1,5-bisphosphate + CO2 + H2O. It catalyses the reaction D-ribulose 1,5-bisphosphate + O2 = 2-phosphoglycolate + (2R)-3-phosphoglycerate + 2 H(+). Functionally, ruBisCO catalyzes two reactions: the carboxylation of D-ribulose 1,5-bisphosphate, the primary event in carbon dioxide fixation, as well as the oxidative fragmentation of the pentose substrate in the photorespiration process. Both reactions occur simultaneously and in competition at the same active site. The polypeptide is Ribulose bisphosphate carboxylase large chain (Atropa belladonna (Belladonna)).